Reading from the N-terminus, the 313-residue chain is uncharacterized protein (313 aa).

Transmembrane regions (helical) follow at residues 42–64 (LVVL…LFLT) and 74–96 (VRAY…TLYV).

Its subcellular location is the cell membrane. This is an uncharacterized protein from Treponema pallidum (strain Nichols).